Reading from the N-terminus, the 141-residue chain is CYIQNCPRGGKRSYPDTEVRQCIPCGPGNRGNCFGPNICCGEDLGCYIGTPETLRCVEENYLPSPCEAGGKPCGAGGRCAAPGVCCNDQSCTMDSSCLDEDSERQRVSPDQNMTQMNGSASDLLLRLMHMANRQQQQTKHY.

Cysteines 1 and 6 form a disulfide. At Gly9 the chain carries Glycine amide. Intrachain disulfides connect Cys22-Cys66, Cys25-Cys39, Cys33-Cys56, Cys40-Cys46, Cys73-Cys85, Cys79-Cys97, and Cys86-Cys91. Asn117 carries N-linked (GlcNAc...) asparagine glycosylation.

This sequence belongs to the vasopressin/oxytocin family. In terms of processing, seven disulfide bonds are present in neurophysin.

It localises to the secreted. In terms of biological role, vasotocin is an antidiuretic hormone. This chain is Vasotocin-neurophysin VT, found in Pelophylax lessonae (Pool frog).